A 155-amino-acid chain; its full sequence is Aspartate 1-decarboxylase (155 aa).

Ser24 serves as the catalytic Schiff-base intermediate with substrate; via pyruvic acid. The residue at position 24 (Ser24) is a Pyruvic acid (Ser). Substrate is bound at residue Thr56. The active-site Proton donor is the Tyr57. 72-74 (GAA) lines the substrate pocket.

It belongs to the PanD family. In terms of assembly, heterooctamer of four alpha and four beta subunits. It depends on pyruvate as a cofactor. Is synthesized initially as an inactive proenzyme, which is activated by self-cleavage at a specific serine bond to produce a beta-subunit with a hydroxyl group at its C-terminus and an alpha-subunit with a pyruvoyl group at its N-terminus.

The protein localises to the cytoplasm. The enzyme catalyses L-aspartate + H(+) = beta-alanine + CO2. It participates in cofactor biosynthesis; (R)-pantothenate biosynthesis; beta-alanine from L-aspartate: step 1/1. In terms of biological role, catalyzes the pyruvoyl-dependent decarboxylation of aspartate to produce beta-alanine. This is Aspartate 1-decarboxylase from Agrobacterium fabrum (strain C58 / ATCC 33970) (Agrobacterium tumefaciens (strain C58)).